Here is a 297-residue protein sequence, read N- to C-terminus: uncharacterized protein (297 aa).

Residues 267–297 (NTQHAGKPGAQHRTRRSPPAFRRADRLRQSA) form a disordered region. A compositionally biased stretch (basic and acidic residues) spans 288–297 (RRADRLRQSA).

This is an uncharacterized protein from Treponema pallidum (strain Nichols).